The following is a 179-amino-acid chain: Large ribosomal subunit protein uL5 (179 aa).

It belongs to the universal ribosomal protein uL5 family. In terms of assembly, part of the 50S ribosomal subunit; part of the 5S rRNA/L5/L18/L25 subcomplex. Contacts the 5S rRNA and the P site tRNA. Forms a bridge to the 30S subunit in the 70S ribosome.

Functionally, this is one of the proteins that bind and probably mediate the attachment of the 5S RNA into the large ribosomal subunit, where it forms part of the central protuberance. In the 70S ribosome it contacts protein S13 of the 30S subunit (bridge B1b), connecting the 2 subunits; this bridge is implicated in subunit movement. Contacts the P site tRNA; the 5S rRNA and some of its associated proteins might help stabilize positioning of ribosome-bound tRNAs. This chain is Large ribosomal subunit protein uL5, found in Shewanella woodyi (strain ATCC 51908 / MS32).